Here is a 1083-residue protein sequence, read N- to C-terminus: DNA primase (1083 aa).

The CHC2-type zinc finger occupies 1022-1061 (CLRYPHRGGRTAPRTFVSLRVDHHNRLCISLAQQCFATKC).

Belongs to the herpesviridae DNA primase family. Associates with the helicase and the primase-associated factor to form the helicase-primase factor.

The protein resides in the host nucleus. Essential component of the helicase/primase complex. Unwinds the DNA at the replication forks and generates single-stranded DNA for both leading and lagging strand synthesis. The primase initiates primer synthesis and thereby produces large amount of short RNA primers on the lagging strand that the polymerase elongates using dNTPs. The chain is DNA primase from Varicella-zoster virus (strain Oka vaccine) (HHV-3).